The primary structure comprises 349 residues: Phenylalanine--tRNA ligase alpha subunit (349 aa).

Residue E259 coordinates Mg(2+).

The protein belongs to the class-II aminoacyl-tRNA synthetase family. Phe-tRNA synthetase alpha subunit type 1 subfamily. Tetramer of two alpha and two beta subunits. It depends on Mg(2+) as a cofactor.

It localises to the cytoplasm. The enzyme catalyses tRNA(Phe) + L-phenylalanine + ATP = L-phenylalanyl-tRNA(Phe) + AMP + diphosphate + H(+). The polypeptide is Phenylalanine--tRNA ligase alpha subunit (Lactobacillus delbrueckii subsp. bulgaricus (strain ATCC 11842 / DSM 20081 / BCRC 10696 / JCM 1002 / NBRC 13953 / NCIMB 11778 / NCTC 12712 / WDCM 00102 / Lb 14)).